Reading from the N-terminus, the 340-residue chain is DNA-directed RNA polymerase subunit alpha (340 aa).

Residues 1-236 form an alpha N-terminal domain (alpha-NTD) region; the sequence is MSVIQKNWQE…DQLQLFINFE (236 aa). The alpha C-terminal domain (alpha-CTD) stretch occupies residues 252 to 340; sequence FNKNLLRKVD…DLAKKLEEPY (89 aa).

It belongs to the RNA polymerase alpha chain family. As to quaternary structure, homodimer. The RNAP catalytic core consists of 2 alpha, 1 beta, 1 beta' and 1 omega subunit. When a sigma factor is associated with the core the holoenzyme is formed, which can initiate transcription.

The catalysed reaction is RNA(n) + a ribonucleoside 5'-triphosphate = RNA(n+1) + diphosphate. Its function is as follows. DNA-dependent RNA polymerase catalyzes the transcription of DNA into RNA using the four ribonucleoside triphosphates as substrates. In Rhodospirillum rubrum (strain ATCC 11170 / ATH 1.1.1 / DSM 467 / LMG 4362 / NCIMB 8255 / S1), this protein is DNA-directed RNA polymerase subunit alpha.